The chain runs to 203 residues: Ribonuclease T (203 aa).

In terms of domain architecture, Exonuclease spans 11 to 185; that stretch reads VVVDVETGGF…YDTEKTAELF (175 aa). The Mg(2+) site is built by aspartate 14, glutamate 16, histidine 172, and aspartate 177. Histidine 172 acts as the Proton donor/acceptor in catalysis.

It belongs to the RNase T family. Homodimer. It depends on Mg(2+) as a cofactor.

Trims short 3' overhangs of a variety of RNA species, leaving a one or two nucleotide 3' overhang. Responsible for the end-turnover of tRNA: specifically removes the terminal AMP residue from uncharged tRNA (tRNA-C-C-A). Also appears to be involved in tRNA biosynthesis. This Pseudomonas putida (strain ATCC 47054 / DSM 6125 / CFBP 8728 / NCIMB 11950 / KT2440) protein is Ribonuclease T.